Consider the following 96-residue polypeptide: Exopolysaccharide production repressor protein (96 aa).

The next 2 membrane-spanning stretches (helical) occupy residues 6–26 (FVVS…FLTG) and 35–55 (TLLC…FLVW). The disordered stretch occupies residues 64–96 (LSPGQLPADPTNDEKQTGKLSLRRLNRPPHFNS).

The protein resides in the cell membrane. Its pathway is glycan metabolism; exopolysaccharide biosynthesis. Its function is as follows. Inhibition of exopolysaccharide synthesis (EPS) and nodulation ability (NOD). The protein is Exopolysaccharide production repressor protein (exoX) of Sinorhizobium fredii (strain NBRC 101917 / NGR234).